The chain runs to 215 residues: MMTLALVGEKIDRNRFTGEKVENSTFFNCDFSGADLSGTEFIGCQFYDRESQKGCNFSRANLKDAIFKSCDLSMADFRNINALGIEIRHCRAQGSDFRGASFMNMITTRTWFCSAYITNTNLSYANFSKVVLEKCELWENRWMGTQVLGATFSGSDLSGGEFSSFDWRAANVTHCDLTNSELGDLDIRGVDLQGVKLDSYQASLLLERLGIAVMG.

Pentapeptide repeat domains follow at residues 25 to 104 and 117 to 191; these read TFFN…SFMN and ITNT…RGVD.

Belongs to the pentapeptide repeat protein family.

Its function is as follows. Probably plays a role in resistance to quinolone antibiotics. Only inhibits ATP-dependent DNA supercoiling by E.coli gyrase at high concentration (30 uM). Protects E.coli gyrase supercoiling activity from inhibition by fluoroquinolones (ciprofloxacin) at 0.1 uM, does not protect M.tuberculosis gyrase activity. This is Pentapeptide repeat protein QnrB4 from Escherichia coli.